Reading from the N-terminus, the 261-residue chain is Glucose 1-dehydrogenase (261 aa).

11–35 (VITGSSTGLGKSMAIRFATEKAKVV) contacts NADP(+). Substrate is bound at residue Ser145. The Proton acceptor role is filled by Tyr158.

Belongs to the short-chain dehydrogenases/reductases (SDR) family. As to quaternary structure, homotetramer.

The enzyme catalyses D-glucose + NAD(+) = D-glucono-1,5-lactone + NADH + H(+). It catalyses the reaction D-glucose + NADP(+) = D-glucono-1,5-lactone + NADPH + H(+). This is Glucose 1-dehydrogenase from Priestia megaterium (Bacillus megaterium).